The following is a 113-amino-acid chain: Ig kappa chain V-II region MOPC 511 (113 aa).

Residues 1–23 (DIVITQDELSKPVTSGESVSISC) are framework-1. Cysteine 23 and cysteine 93 are disulfide-bonded. Residues 24–39 (RSSKSLLYKDGKTYLN) are complementarity-determining-1. The framework-2 stretch occupies residues 40–54 (WFLQGPQQSPRLLIY). Residues 55–61 (LMSTRAS) form a complementarity-determining-2 region. The framework-3 stretch occupies residues 62–93 (GVSDRFSGSGSGTDFTLEISRVKAEDVGVYYC). Positions 94–102 (QQLVEYPLT) are complementarity-determining-3. A framework-4 region spans residues 103–112 (FGAGTKLELK).

The chain is Ig kappa chain V-II region MOPC 511 from Mus musculus (Mouse).